Consider the following 383-residue polypeptide: Pantothenate kinase 1 (383 aa).

Belongs to the type II pantothenate kinase family. Highly expressed in leaves and developing seeds. Expressed in roots, stems and flowers.

The enzyme catalyses (R)-pantothenate + ATP = (R)-4'-phosphopantothenate + ADP + H(+). The protein operates within cofactor biosynthesis; coenzyme A biosynthesis; CoA from (R)-pantothenate: step 1/5. Regulated by feedback inhibition by malonyl-CoA. Catalyzes the phosphorylation of pantothenate the first step in CoA biosynthesis. May play a role in the physiological regulation of the intracellular CoA concentration. Functionally redudant with PANK2. This chain is Pantothenate kinase 1 (PANK1), found in Arabidopsis thaliana (Mouse-ear cress).